Reading from the N-terminus, the 299-residue chain is 4-diphosphocytidyl-2-C-methyl-D-erythritol kinase (299 aa).

K16 is an active-site residue. Residue 101 to 111 (PVAAGIGGGSA) participates in ATP binding. D143 is a catalytic residue.

Belongs to the GHMP kinase family. IspE subfamily.

It carries out the reaction 4-CDP-2-C-methyl-D-erythritol + ATP = 4-CDP-2-C-methyl-D-erythritol 2-phosphate + ADP + H(+). Its pathway is isoprenoid biosynthesis; isopentenyl diphosphate biosynthesis via DXP pathway; isopentenyl diphosphate from 1-deoxy-D-xylulose 5-phosphate: step 3/6. Catalyzes the phosphorylation of the position 2 hydroxy group of 4-diphosphocytidyl-2C-methyl-D-erythritol. The chain is 4-diphosphocytidyl-2-C-methyl-D-erythritol kinase from Rhodopseudomonas palustris (strain ATCC BAA-98 / CGA009).